The following is a 675-amino-acid chain: DNA ligase (675 aa).

NAD(+) contacts are provided by residues 34 to 38 (DYAFD), 83 to 84 (SL), and E117. K119 serves as the catalytic N6-AMP-lysine intermediate. 4 residues coordinate NAD(+): R140, E184, K297, and K321. Zn(2+)-binding residues include C415, C418, C433, and C439. The BRCT domain maps to 598–675 (LVNRNFEGMK…GEEEFEAMLF (78 aa)).

The protein belongs to the NAD-dependent DNA ligase family. LigA subfamily. Requires Mg(2+) as cofactor. Mn(2+) serves as cofactor.

It carries out the reaction NAD(+) + (deoxyribonucleotide)n-3'-hydroxyl + 5'-phospho-(deoxyribonucleotide)m = (deoxyribonucleotide)n+m + AMP + beta-nicotinamide D-nucleotide.. Its function is as follows. DNA ligase that catalyzes the formation of phosphodiester linkages between 5'-phosphoryl and 3'-hydroxyl groups in double-stranded DNA using NAD as a coenzyme and as the energy source for the reaction. It is essential for DNA replication and repair of damaged DNA. The sequence is that of DNA ligase from Prosthecochloris aestuarii (strain DSM 271 / SK 413).